Reading from the N-terminus, the 460-residue chain is tRNA-2-methylthio-N(6)-dimethylallyladenosine synthase (460 aa).

The 116-residue stretch at 23-138 (RKVYVHTFGC…LPEMVARAER (116 aa)) folds into the MTTase N-terminal domain. [4Fe-4S] cluster is bound by residues C32, C68, C101, C176, C180, and C183. The 233-residue stretch at 162-394 (ARGRPTAFVT…QAAQRRIAAA (233 aa)) folds into the Radical SAM core domain. The TRAM domain occupies 397–460 (AAELGKVVEV…GGSSLSGTPA (64 aa)).

Belongs to the methylthiotransferase family. MiaB subfamily. As to quaternary structure, monomer. Requires [4Fe-4S] cluster as cofactor.

Its subcellular location is the cytoplasm. It catalyses the reaction N(6)-dimethylallyladenosine(37) in tRNA + (sulfur carrier)-SH + AH2 + 2 S-adenosyl-L-methionine = 2-methylsulfanyl-N(6)-dimethylallyladenosine(37) in tRNA + (sulfur carrier)-H + 5'-deoxyadenosine + L-methionine + A + S-adenosyl-L-homocysteine + 2 H(+). Its function is as follows. Catalyzes the methylthiolation of N6-(dimethylallyl)adenosine (i(6)A), leading to the formation of 2-methylthio-N6-(dimethylallyl)adenosine (ms(2)i(6)A) at position 37 in tRNAs that read codons beginning with uridine. The sequence is that of tRNA-2-methylthio-N(6)-dimethylallyladenosine synthase from Anaeromyxobacter sp. (strain Fw109-5).